The chain runs to 206 residues: Large ribosomal subunit protein uL13 (206 aa).

The protein belongs to the universal ribosomal protein uL13 family.

In Picea mariana (Black spruce), this protein is Large ribosomal subunit protein uL13 (RPL13A).